The following is a 224-amino-acid chain: Ribose-5-phosphate isomerase A 1 (224 aa).

Residues 29 to 32 (SGST), 85 to 88 (DGAD), and 98 to 101 (KGGG) contribute to the substrate site. The Proton acceptor role is filled by E107. Residue K125 coordinates substrate.

The protein belongs to the ribose 5-phosphate isomerase family. Homodimer.

It catalyses the reaction aldehydo-D-ribose 5-phosphate = D-ribulose 5-phosphate. It participates in carbohydrate degradation; pentose phosphate pathway; D-ribose 5-phosphate from D-ribulose 5-phosphate (non-oxidative stage): step 1/1. Catalyzes the reversible conversion of ribose-5-phosphate to ribulose 5-phosphate. This chain is Ribose-5-phosphate isomerase A 1, found in Oceanobacillus iheyensis (strain DSM 14371 / CIP 107618 / JCM 11309 / KCTC 3954 / HTE831).